Reading from the N-terminus, the 280-residue chain is MGNMIKKASLIALLPLFTAAAAAATDAETSMESGSSSHLKSFLMSVSMIGLSEIGDKTFLIAALMAMRHKRVLVFSAAATSLAIMTILSGVVGHSAVAFLSERYTAFFAGILFLVFGYKLTMEGLEMSKDAGVEEEMAEVEEEIAIKDMNQDMDDVEKGGDTAYDKQLKNASIGKKIVHRIRELASFMFSPVWVQIFLMVFLGELGDRSQISIIAMATDSDYWYVIAGAVIGHAICSGLAVVGGKLLATRISIRTITLASSLLFFIFALMYIYQAFTTQD.

Residues 1 to 3 (MGN) are Cytoplasmic-facing. A helical transmembrane segment spans residues 4–24 (MIKKASLIALLPLFTAAAAAA). At 25–45 (TDAETSMESGSSSHLKSFLMS) the chain is on the vacuolar side. The helical transmembrane segment at 46–66 (VSMIGLSEIGDKTFLIAALMA) threads the bilayer. Topologically, residues 67-71 (MRHKR) are cytoplasmic. A helical transmembrane segment spans residues 72–92 (VLVFSAAATSLAIMTILSGVV). The Vacuolar segment spans residues 93–104 (GHSAVAFLSERY). Residues 105–125 (TAFFAGILFLVFGYKLTMEGL) form a helical membrane-spanning segment. The Cytoplasmic portion of the chain corresponds to 126–183 (EMSKDAGVEEEMAEVEEEIAIKDMNQDMDDVEKGGDTAYDKQLKNASIGKKIVHRIRE). Residues 184–204 (LASFMFSPVWVQIFLMVFLGE) traverse the membrane as a helical segment. Over 205-222 (LGDRSQISIIAMATDSDY) the chain is Vacuolar. Residues 223–243 (WYVIAGAVIGHAICSGLAVVG) traverse the membrane as a helical segment. Residues 244–255 (GKLLATRISIRT) are Cytoplasmic-facing. The chain crosses the membrane as a helical span at residues 256–276 (ITLASSLLFFIFALMYIYQAF). Residues 277–280 (TTQD) lie on the Vacuolar side of the membrane.

Belongs to the GDT1 family.

The protein resides in the golgi apparatus. It is found in the cis-Golgi network membrane. The catalysed reaction is Ca(2+)(in) + n H(+)(out) = Ca(2+)(out) + n H(+)(in). It carries out the reaction Mn(2+)(in) + n H(+)(out) = Mn(2+)(out) + n H(+)(in). Divalent cation:proton antiporter that exchanges calcium or manganese ions for protons across the Golgi membrane. Mediates the reversible transport of calcium or manganese to the Golgi lumen driven by the proton gradient and possibly the membrane potential generated by V-ATPase. Provides calcium or manganese cofactors to resident Golgi enzymes and contributes to the maintenance of an acidic luminal Golgi pH required for proper functioning of the secretory pathway. The transport stoichiometry remains to be elucidated. This chain is Divalent cation/proton antiporter GDT1, found in Saccharomyces cerevisiae (strain ATCC 204508 / S288c) (Baker's yeast).